The primary structure comprises 133 residues: Large ribosomal subunit protein bL20 (133 aa).

This sequence belongs to the bacterial ribosomal protein bL20 family.

Binds directly to 23S ribosomal RNA and is necessary for the in vitro assembly process of the 50S ribosomal subunit. It is not involved in the protein synthesizing functions of that subunit. The protein is Large ribosomal subunit protein bL20 of Bartonella tribocorum (strain CIP 105476 / IBS 506).